Reading from the N-terminus, the 1323-residue chain is Glutamate receptor ionotropic, NMDA 2D (1323 aa).

Positions 1–27 are cleaved as a signal peptide; sequence MRGAGGPRGPRGPAKMLLLLALACASP. The Extracellular segment spans residues 28-579; the sequence is FPEEVPGPGA…SPSAFLEPYS (552 aa). Asn89 carries an N-linked (GlcNAc...) asparagine glycan. Cys101 and Cys345 are oxidised to a cystine. Asn349, Asn363, Asn381, and Asn464 each carry an N-linked (GlcNAc...) asparagine glycan. 2 disulfides stabilise this stretch: Cys452-Cys480 and Cys459-Cys481. L-glutamate contacts are provided by Ser536, Thr538, and Arg543. Residue Asn566 is glycosylated (N-linked (GlcNAc...) asparagine). The helical transmembrane segment at 580-601 threads the bilayer; sequence PAVWVMMFVMCLTVVAVTVFIF. Residues 602–626 are Cytoplasmic-facing; that stretch reads EYLSPVGYNRSLATGKRPGGSTFTI. Positions 627–638 form an intramembrane region, discontinuously helical; that stretch reads GKSIWLLWALVF. The pore-forming stretch occupies residues 628–647; the sequence is KSIWLLWALVFNNSVPVENP. The Cytoplasmic portion of the chain corresponds to 639–650; that stretch reads NNSVPVENPRGT. Residues 651–671 traverse the membrane as a helical segment; the sequence is TSKIMVLVWAFFAVIFLASYT. The Extracellular portion of the chain corresponds to 672 to 840; sequence ANLAAFMIQE…EVMSSKLDID (169 aa). Asn712 is a glycosylation site (N-linked (GlcNAc...) asparagine). Residues Ser714, Thr715, and Asp756 each coordinate L-glutamate. A disulfide bridge connects residues Cys770 and Cys825. The chain crosses the membrane as a helical span at residues 841–864; it reads NMAGVFYMLLVAMGLSLLVFAWEH. Over 865 to 1323 the chain is Cytoplasmic; it reads LVYWRLRHCL…AHFSSLESEV (459 aa). Disordered regions lie at residues 897–952, 977–1112, and 1201–1323; these read EAAP…PGGA, AAPR…SLGG, and PWAA…ESEV. Residues 899–929 are compositionally biased toward pro residues; sequence APPPAKPPPPPQPLPSPAYPAARPPPGPAPF. Residues 931–940 are compositionally biased toward basic and acidic residues; the sequence is PRERAAADRW. Low complexity predominate over residues 977 to 986; it reads AAPRGAAGRP. Residues 987 to 1001 are compositionally biased toward pro residues; the sequence is LSPPTTQPPQKPPPS. The span at 1030–1039 shows a compositional bias: low complexity; sequence AAAAAAVGPP. The segment covering 1080 to 1092 has biased composition (pro residues); the sequence is TAPPPRRAAPPPC. Residues 1208–1228 show a composition bias toward basic residues; the sequence is PRRRARCGCPRPHPHRPRASH. Arg1303 bears the Omega-N-methylarginine mark. Ser1313 carries the phosphoserine modification. Residues 1321-1323 carry the PDZ-binding motif; sequence SEV.

This sequence belongs to the glutamate-gated ion channel (TC 1.A.10.1) family. NR2D/GRIN2D subfamily. In terms of assembly, heterotetramer. Forms heterotetrameric channels composed of two GluN1/zeta subunits (GRIN1), and two identical GluN2/epsilon subunits (GRIN2A, GRIN2B, GRIN2C or GRIN2D) or GluN3 subunits (GRIN3A or GRIN3B) (in vitro). In vivo, the subunit composition may depend on the expression levels of the different subunits. Interacts with PDZ domains of PATJ and DLG4. In terms of tissue distribution, detected in neonate brain synaptosomes (at protein level).

It localises to the cell membrane. It is found in the postsynaptic cell membrane. The catalysed reaction is Ca(2+)(in) = Ca(2+)(out). It carries out the reaction Na(+)(in) = Na(+)(out). The enzyme catalyses K(+)(in) = K(+)(out). Component of N-methyl-D-aspartate (NMDA) receptors (NMDARs) that function as heterotetrameric, ligand-gated cation channels with high calcium permeability and voltage-dependent block by Mg(2+). Participates in synaptic plasticity for learning and memory formation. Channel activation requires binding of the neurotransmitter L-glutamate to the GluN2 subunit, glycine or D-serine binding to the GluN1 subunit, plus membrane depolarization to eliminate channel inhibition by Mg(2+). NMDARs mediate simultaneously the potasium efflux and the influx of calcium and sodium. Each GluN2 subunit confers differential attributes to channel properties, including activation, deactivation and desensitization kinetics, pH sensitivity, Ca2(+) permeability, and binding to allosteric modulators. This chain is Glutamate receptor ionotropic, NMDA 2D, found in Mus musculus (Mouse).